A 216-amino-acid chain; its full sequence is Cytidylate kinase (216 aa).

Residue 7–15 coordinates ATP; sequence GPSGTGKST.

This sequence belongs to the cytidylate kinase family. Type 1 subfamily.

It is found in the cytoplasm. It catalyses the reaction CMP + ATP = CDP + ADP. The catalysed reaction is dCMP + ATP = dCDP + ADP. This chain is Cytidylate kinase, found in Chlamydia trachomatis serovar D (strain ATCC VR-885 / DSM 19411 / UW-3/Cx).